The following is a 177-amino-acid chain: Ribulose bisphosphate carboxylase small subunit, chloroplastic 3 (177 aa).

Residues Met1 to Ser56 constitute a chloroplast transit peptide.

It belongs to the RuBisCO small chain family. In terms of assembly, heterohexadecamer of 8 large and 8 small subunits.

It is found in the plastid. The protein localises to the chloroplast. In terms of biological role, ruBisCO catalyzes two reactions: the carboxylation of D-ribulose 1,5-bisphosphate, the primary event in carbon dioxide fixation, as well as the oxidative fragmentation of the pentose substrate. Both reactions occur simultaneously and in competition at the same active site. Although the small subunit is not catalytic it is essential for maximal activity. The polypeptide is Ribulose bisphosphate carboxylase small subunit, chloroplastic 3 (Lemna gibba (Swollen duckweed)).